A 109-amino-acid chain; its full sequence is Encapsulin nanocompartment cargo protein EncD (109 aa).

A Fe cation-binding site is contributed by Glu-47. The tract at residues 61–94 is disordered; the sequence is AGGRGAAAPTPAREAPAEAPRLARGSADELHEAA. Low complexity predominate over residues 66 to 85; that stretch reads AAAPTPAREAPAEAPRLARG. The tract at residues 100–106 is probable targeting peptide; the sequence is LTVGSLR.

It localises to the encapsulin nanocompartment. Its function is as follows. Cargo protein of a type 1 encapsulin nanocompartment. May help nucleate Fe atoms in the interior of the encapsulin nanocompartment. Present in about 47 copies/encapsulin nanocompartment. The sequence is that of Encapsulin nanocompartment cargo protein EncD from Myxococcus xanthus (strain DK1622).